The chain runs to 346 residues: N-acetyl-gamma-glutamyl-phosphate reductase (346 aa).

Residue cysteine 150 is part of the active site.

Belongs to the NAGSA dehydrogenase family. Type 1 subfamily.

Its subcellular location is the cytoplasm. It catalyses the reaction N-acetyl-L-glutamate 5-semialdehyde + phosphate + NADP(+) = N-acetyl-L-glutamyl 5-phosphate + NADPH + H(+). It functions in the pathway amino-acid biosynthesis; L-arginine biosynthesis; N(2)-acetyl-L-ornithine from L-glutamate: step 3/4. Its function is as follows. Catalyzes the NADPH-dependent reduction of N-acetyl-5-glutamyl phosphate to yield N-acetyl-L-glutamate 5-semialdehyde. This chain is N-acetyl-gamma-glutamyl-phosphate reductase, found in Desulforudis audaxviator (strain MP104C).